The following is a 433-amino-acid chain: MALDLRTIFQCEPSENNLGSENSAFQQSQGPAVQREEGISEFSRMVLNSFQDSNNSYARQELQRLYRIFHSWLQPEKHSKDEIISLLVLEQFMIGGHCNDKASVKEKWKSSGKNLERFIEDLTDDSINPPALVHVHMQGQEALFSEDMPLRDVIVHLTKQVNAQTTREANMGTPSQTSQDTSLETGQGYEDEQDGWNSSSKTTRVNENITNQGNQIVSLIIIQEENGPRPEEGGVSSDNPYNSKRAELVTARSQEGSINGITFQGVPMVMGAGCISQPEQSSPESALTHQSNEGNSTCEVHQKGSHGVQKSYKCEECPKVFKYLCHLLAHQRRHRNERPFVCPECQKGFFQISDLRVHQIIHTGKKPFTCSMCKKSFSHKTNLRSHERIHTGEKPYTCPFCKTSYRQSSTYHRHMRTHEKITLPSVPSTPEAS.

The SCAN box domain maps to 44–126; it reads RMVLNSFQDS…RFIEDLTDDS (83 aa). Polar residues-rich tracts occupy residues 165–185, 195–210, and 277–299; these read TTRE…SLET, GWNS…ENIT, and QPEQ…STCE. Disordered stretches follow at residues 165-210 and 275-301; these read TTRE…ENIT and ISQP…CEVH. 4 C2H2-type zinc fingers span residues 312–334, 340–362, 368–390, and 396–418; these read YKCE…QRRH, FVCP…QIIH, FTCS…ERIH, and YTCP…MRTH.

The protein localises to the nucleus. The protein resides in the chromosome. It localises to the telomere. Its function is as follows. Embryonic stem (ES) cell-specific transcription factor required to regulate ES cell pluripotency. Binds telomeres and plays a key role in genomic stability in ES cells by regulating telomere elongation. Acts as an activator of spontaneous telomere sister chromatid exchange (T-SCE) and telomere elongation in undifferentiated ES cells. In Homo sapiens (Human), this protein is Zinc finger and SCAN domain-containing protein 4 (ZSCAN4).